Reading from the N-terminus, the 513-residue chain is ATP synthase subunit alpha (513 aa).

Residue 169–176 participates in ATP binding; it reads GDRQTGKT.

Belongs to the ATPase alpha/beta chains family. F-type ATPases have 2 components, CF(1) - the catalytic core - and CF(0) - the membrane proton channel. CF(1) has five subunits: alpha(3), beta(3), gamma(1), delta(1), epsilon(1). CF(0) has three main subunits: a(1), b(2) and c(9-12). The alpha and beta chains form an alternating ring which encloses part of the gamma chain. CF(1) is attached to CF(0) by a central stalk formed by the gamma and epsilon chains, while a peripheral stalk is formed by the delta and b chains.

It is found in the cell inner membrane. The enzyme catalyses ATP + H2O + 4 H(+)(in) = ADP + phosphate + 5 H(+)(out). Functionally, produces ATP from ADP in the presence of a proton gradient across the membrane. The alpha chain is a regulatory subunit. In Thiobacillus denitrificans (strain ATCC 25259 / T1), this protein is ATP synthase subunit alpha.